Here is a 217-residue protein sequence, read N- to C-terminus: Glutathione S-transferase B (217 aa).

Residues 1–87 enclose the GST N-terminal domain; it reads PMTLGYWNIR…YIARKHNLCG (87 aa). Glutathione contacts are provided by residues 6–7, 45–49, 58–59, and 71–72; these read YW, WLNEK, NL, and QS. In terms of domain architecture, GST C-terminal spans 89 to 207; it reads TEEETIRMDI…KSSRFLPKPL (119 aa). Tyrosine 115 contacts substrate.

The protein belongs to the GST superfamily. Mu family. As to quaternary structure, homodimer.

The protein localises to the cytoplasm. It catalyses the reaction RX + glutathione = an S-substituted glutathione + a halide anion + H(+). The catalysed reaction is prostaglandin A2 + glutathione = prostaglandin A2-S-(R)-glutathione. The enzyme catalyses prostaglandin J2 + glutathione = prostaglandin J2-S-(R)-glutathione. It carries out the reaction prostaglandin J2 + glutathione = prostaglandin J2-S-(S)-glutathione. It catalyses the reaction prostaglandin A2 + glutathione = prostaglandin A2-S-(S)-glutathione. The catalysed reaction is 11(S)-hydroxy-14(S),15(S)-epoxy-(5Z,8Z,12E)-eicosatrienoate + glutathione = (11S,15S)-dihydroxy-14(R)-S-glutathionyl-(5Z,8Z,12E)-eicosatrienoate. Its function is as follows. Conjugation of reduced glutathione to a wide number of exogenous and endogenous hydrophobic electrophiles. Involved in the formation of glutathione conjugates of both prostaglandin A2 (PGA2) and prostaglandin J2 (PGJ2). Participates in the formation of novel hepoxilin regioisomers. In Cavia porcellus (Guinea pig), this protein is Glutathione S-transferase B (GSTM1).